Consider the following 185-residue polypeptide: Ribosome-recycling factor (185 aa).

The protein belongs to the RRF family.

The protein localises to the cytoplasm. In terms of biological role, responsible for the release of ribosomes from messenger RNA at the termination of protein biosynthesis. May increase the efficiency of translation by recycling ribosomes from one round of translation to another. This chain is Ribosome-recycling factor, found in Zymomonas mobilis subsp. mobilis (strain ATCC 31821 / ZM4 / CP4).